Here is a 70-residue protein sequence, read N- to C-terminus: Alpha-toxin Bot9 (70 aa).

The LCN-type CS-alpha/beta domain maps to 6-69 (RDGYIVYPNN…PIKDPSYKCY (64 aa)). Intrachain disulfides connect Cys-16–Cys-68, Cys-20–Cys-40, Cys-26–Cys-50, and Cys-30–Cys-52.

It belongs to the long (4 C-C) scorpion toxin superfamily. Sodium channel inhibitor family. Alpha subfamily. As to expression, expressed by the venom gland.

The protein localises to the secreted. Alpha toxins bind voltage-independently at site-3 of sodium channels (Nav) and inhibit the inactivation of the activated channels, thereby blocking neuronal transmission. This toxin is active against rat Nav1.2/SCN2A and B.germanica Nav1. This chain is Alpha-toxin Bot9, found in Buthus occitanus tunetanus (Common European scorpion).